The chain runs to 663 residues: DNA topoisomerase 4 subunit B (663 aa).

ATP is bound by residues tyrosine 7, asparagine 47, aspartate 74, 114 to 120, and lysine 341; that span reads GLHGVGA. Residues 386-416 are disordered; that stretch reads REAARKAREDARSGKKNKRKDTLLSGKLTPA. Basic and acidic residues predominate over residues 387-398; sequence EAARKAREDARS. Positions 424–538 constitute a Toprim domain; it reads NELYLVEGDS…ADRVFIALPP (115 aa). The Mg(2+) site is built by glutamate 430, aspartate 503, and aspartate 505.

This sequence belongs to the type II topoisomerase family. ParE type 2 subfamily. As to quaternary structure, heterotetramer composed of ParC and ParE. The cofactor is Mg(2+). It depends on Mn(2+) as a cofactor. Ca(2+) is required as a cofactor.

It carries out the reaction ATP-dependent breakage, passage and rejoining of double-stranded DNA.. In terms of biological role, topoisomerase IV is essential for chromosome segregation. It relaxes supercoiled DNA. Performs the decatenation events required during the replication of a circular DNA molecule. The protein is DNA topoisomerase 4 subunit B of Staphylococcus aureus (strain MSSA476).